Reading from the N-terminus, the 152-residue chain is CASP-like protein 5C3 (152 aa).

Over 1-17 (MVEVPGSVGTTASLSLR) the chain is Cytoplasmic. The helical transmembrane segment at 18–38 (LGQMVLAFGSLLFMTIGVRFY) threads the bilayer. Topologically, residues 39-42 (QFTA) are extracellular. The chain crosses the membrane as a helical span at residues 43-63 (FCYLVTIMSLAIPWNLTLAMV). At 64-78 (DIYCVILQQPFQKPR) the chain is on the cytoplasmic side. The chain crosses the membrane as a helical span at residues 79–99 (ILLAISIGDWVVSVLALASAS). The Extracellular segment spans residues 100–128 (SAASVVDILRSNESSCPPTICNRYQFAAT). The N-linked (GlcNAc...) asparagine glycan is linked to Asn-111. A helical membrane pass occupies residues 129–149 (LAFLTWFLSLSSSLFNLWLLP). Residues 150 to 152 (SLI) lie on the Cytoplasmic side of the membrane.

Belongs to the Casparian strip membrane proteins (CASP) family. As to quaternary structure, homodimer and heterodimers. As to expression, expressed in the floral organ abscission zone and flower buds.

The protein localises to the cell membrane. In Arabidopsis thaliana (Mouse-ear cress), this protein is CASP-like protein 5C3.